Reading from the N-terminus, the 103-residue chain is MTVLERLAATVEARKGADPDSSWTAKLFAKGPEKCAEKFGEEAVEAIIEAVRGDRAKLASEAADVLYHLLVMLAARDVTLAEVMAVLEAREGTSGIAEKAGRG.

It belongs to the PRA-PH family.

Its subcellular location is the cytoplasm. It catalyses the reaction 1-(5-phospho-beta-D-ribosyl)-ATP + H2O = 1-(5-phospho-beta-D-ribosyl)-5'-AMP + diphosphate + H(+). Its pathway is amino-acid biosynthesis; L-histidine biosynthesis; L-histidine from 5-phospho-alpha-D-ribose 1-diphosphate: step 2/9. The polypeptide is Phosphoribosyl-ATP pyrophosphatase (hisE) (Cereibacter sphaeroides (strain ATCC 17023 / DSM 158 / JCM 6121 / CCUG 31486 / LMG 2827 / NBRC 12203 / NCIMB 8253 / ATH 2.4.1.) (Rhodobacter sphaeroides)).